Consider the following 280-residue polypeptide: 23S rRNA (guanine(748)-N(1))-methyltransferase (280 aa).

Residues Cys-11, Cys-14, Cys-27, and His-31 each coordinate Zn(2+). Residues Tyr-70, 100–101 (TG), and His-188 contribute to the S-adenosyl-L-methionine site.

It belongs to the methyltransferase superfamily. RlmA family.

The catalysed reaction is guanosine(748) in 23S rRNA + S-adenosyl-L-methionine = N(1)-methylguanosine(748) in 23S rRNA + S-adenosyl-L-homocysteine + H(+). Specifically methylates the guanosine in position 748 of 23S rRNA. Confers resistance to the macrolide antibiotic tylosine. The sequence is that of 23S rRNA (guanine(748)-N(1))-methyltransferase (rlmAII) from Streptomyces fradiae (Streptomyces roseoflavus).